The primary structure comprises 489 residues: Lysine--tRNA ligase (489 aa).

Residues Glu398 and Glu405 each contribute to the Mg(2+) site.

It belongs to the class-II aminoacyl-tRNA synthetase family. In terms of assembly, homodimer. It depends on Mg(2+) as a cofactor.

Its subcellular location is the cytoplasm. The catalysed reaction is tRNA(Lys) + L-lysine + ATP = L-lysyl-tRNA(Lys) + AMP + diphosphate. In Moorella thermoacetica (strain ATCC 39073 / JCM 9320), this protein is Lysine--tRNA ligase.